We begin with the raw amino-acid sequence, 273 residues long: Glutamate racemase (273 aa).

Substrate contacts are provided by residues 10-11 (DS) and 42-43 (YG). Residue Cys73 is the Proton donor/acceptor of the active site. 74 to 75 (NT) lines the substrate pocket. Cys184 acts as the Proton donor/acceptor in catalysis. 185–186 (TH) lines the substrate pocket.

Belongs to the aspartate/glutamate racemases family.

It catalyses the reaction L-glutamate = D-glutamate. The protein operates within cell wall biogenesis; peptidoglycan biosynthesis. Functionally, provides the (R)-glutamate required for cell wall biosynthesis. The protein is Glutamate racemase of Desulforudis audaxviator (strain MP104C).